A 569-amino-acid polypeptide reads, in one-letter code: Sulfite reductase [NADPH] hemoprotein beta-component (569 aa).

[4Fe-4S] cluster contacts are provided by Cys-433, Cys-439, Cys-478, and Cys-482. Residue Cys-482 participates in siroheme binding.

Belongs to the nitrite and sulfite reductase 4Fe-4S domain family. As to quaternary structure, alpha(8)-beta(8). The alpha component is a flavoprotein, the beta component is a hemoprotein. Siroheme is required as a cofactor. It depends on [4Fe-4S] cluster as a cofactor.

The enzyme catalyses hydrogen sulfide + 3 NADP(+) + 3 H2O = sulfite + 3 NADPH + 4 H(+). Its pathway is sulfur metabolism; hydrogen sulfide biosynthesis; hydrogen sulfide from sulfite (NADPH route): step 1/1. Its function is as follows. Component of the sulfite reductase complex that catalyzes the 6-electron reduction of sulfite to sulfide. This is one of several activities required for the biosynthesis of L-cysteine from sulfate. This Blochmanniella floridana protein is Sulfite reductase [NADPH] hemoprotein beta-component.